Here is a 584-residue protein sequence, read N- to C-terminus: 2-succinyl-5-enolpyruvyl-6-hydroxy-3-cyclohexene-1-carboxylate synthase (584 aa).

Belongs to the TPP enzyme family. MenD subfamily. Homodimer. Requires Mg(2+) as cofactor. Mn(2+) serves as cofactor. It depends on thiamine diphosphate as a cofactor.

It carries out the reaction isochorismate + 2-oxoglutarate + H(+) = 5-enolpyruvoyl-6-hydroxy-2-succinyl-cyclohex-3-ene-1-carboxylate + CO2. It functions in the pathway quinol/quinone metabolism; 1,4-dihydroxy-2-naphthoate biosynthesis; 1,4-dihydroxy-2-naphthoate from chorismate: step 2/7. It participates in quinol/quinone metabolism; menaquinone biosynthesis. Its function is as follows. Catalyzes the thiamine diphosphate-dependent decarboxylation of 2-oxoglutarate and the subsequent addition of the resulting succinic semialdehyde-thiamine pyrophosphate anion to isochorismate to yield 2-succinyl-5-enolpyruvyl-6-hydroxy-3-cyclohexene-1-carboxylate (SEPHCHC). This is 2-succinyl-5-enolpyruvyl-6-hydroxy-3-cyclohexene-1-carboxylate synthase from Bacillus cereus (strain ATCC 14579 / DSM 31 / CCUG 7414 / JCM 2152 / NBRC 15305 / NCIMB 9373 / NCTC 2599 / NRRL B-3711).